The sequence spans 77 residues: Small ribosomal subunit protein bS16c (77 aa).

It belongs to the bacterial ribosomal protein bS16 family.

It is found in the plastid. The protein localises to the chloroplast. This Eucalyptus globulus subsp. globulus (Tasmanian blue gum) protein is Small ribosomal subunit protein bS16c.